The chain runs to 340 residues: Photosystem II protein D1 (340 aa).

The next 3 helical transmembrane spans lie at 25–42 (YIGW…LATV), 114–129 (HFFL…EWEF), and 138–152 (WIFV…AAAA). His-114 contacts chlorophyll a. Pheophytin a is bound at residue Trp-122. [CaMn4O5] cluster contacts are provided by Asp-166 and Glu-185. A helical transmembrane segment spans residues 193-214 (FHILGVAGVFGGSLFSAMHGSL). A chlorophyll a-binding site is contributed by His-194. Residues His-211 and 260 to 261 (SF) each bind a quinone. His-211 contacts Fe cation. His-268 contacts Fe cation. Residues 270–284 (FLAAWPVIGIWFTSL) traverse the membrane as a helical segment. Residues His-328, Glu-329, Asp-338, and Ala-340 each contribute to the [CaMn4O5] cluster site.

Belongs to the reaction center PufL/M/PsbA/D family. In terms of assembly, PSII is composed of 1 copy each of membrane proteins PsbA, PsbB, PsbC, PsbD, PsbE, PsbF, PsbH, PsbI, PsbJ, PsbK, PsbL, PsbM, PsbT, PsbX, PsbY, PsbZ, Psb30/Ycf12, at least 3 peripheral proteins of the oxygen-evolving complex and a large number of cofactors. It forms dimeric complexes. The D1/D2 heterodimer binds P680, chlorophylls that are the primary electron donor of PSII, and subsequent electron acceptors. It shares a non-heme iron and each subunit binds pheophytin, quinone, additional chlorophylls, carotenoids and lipids. D1 provides most of the ligands for the Mn4-Ca-O5 cluster of the oxygen-evolving complex (OEC). There is also a Cl(-1) ion associated with D1 and D2, which is required for oxygen evolution. The PSII complex binds additional chlorophylls, carotenoids and specific lipids. serves as cofactor. Post-translationally, tyr-157 forms a radical intermediate that is referred to as redox-active TyrZ, YZ or Y-Z.

The protein resides in the plastid. Its subcellular location is the chloroplast thylakoid membrane. It carries out the reaction 2 a plastoquinone + 4 hnu + 2 H2O = 2 a plastoquinol + O2. In terms of biological role, photosystem II (PSII) is a light-driven water:plastoquinone oxidoreductase that uses light energy to abstract electrons from H(2)O, generating O(2) and a proton gradient subsequently used for ATP formation. It consists of a core antenna complex that captures photons, and an electron transfer chain that converts photonic excitation into a charge separation. The D1/D2 (PsbA/PsbD) reaction center heterodimer binds P680, the primary electron donor of PSII as well as several subsequent electron acceptors. The chain is Photosystem II protein D1 from Amphidinium operculatum (Dinoflagellate).